Consider the following 375-residue polypeptide: MAQSRRMLVLRAVVEDYIRSQEPVGSTTLTRDHDLGVSSATVRNDMAALEDEGYLIQPHTSAGRVPTEKGYRYFVDRLATVVPLSEAQRRGINSFLSGSVNLQDTLQRAARLLAQITGQVAVVAAPSLSKSTLRHIEIVPVSINTLLAVVITDTGRVAQHILNVTKLPDVTTLTHLTNEINTQCSGVSLTRTADCVRQMGARKEYHAISTLAETLAQAFDGMADDERASELYMAGTSRLAHQRTVADLAPLFDALEEQVVLMKLMSSLSETTQSDGVGVAIGSETHTPGLLHASVVTSGYGRTSAAATDGATHAAASSQTENQSGDDTRQAGEPVAFVGSIGPTHMDYAATMAAVRAVARYLTAFLAHDEGQPAD.

Low complexity predominate over residues 307–318; that stretch reads ATDGATHAAASS. Residues 307–331 form a disordered region; that stretch reads ATDGATHAAASSQTENQSGDDTRQA.

Belongs to the HrcA family.

Negative regulator of class I heat shock genes (grpE-dnaK-dnaJ and groELS operons). Prevents heat-shock induction of these operons. This is Heat-inducible transcription repressor HrcA from Bifidobacterium adolescentis (strain ATCC 15703 / DSM 20083 / NCTC 11814 / E194a).